A 142-amino-acid chain; its full sequence is MRHSKSGRKLNRTASHRKAMFANMAISLIEHEQIVTTLPKAKEIRPIVERLVTLGKRGGLHARRQAIASLRDAGKVAKLFDTLAPRYASRNGGYLRIMKAGFRTGDNAPMAVIEFVDRDVDAKGAVDRVRTESSANEKEASS.

Belongs to the bacterial ribosomal protein bL17 family. In terms of assembly, part of the 50S ribosomal subunit. Contacts protein L32.

The sequence is that of Large ribosomal subunit protein bL17 from Bartonella henselae (strain ATCC 49882 / DSM 28221 / CCUG 30454 / Houston 1) (Rochalimaea henselae).